Here is a 140-residue protein sequence, read N- to C-terminus: ATP synthase epsilon chain (140 aa).

Belongs to the ATPase epsilon chain family. In terms of assembly, F-type ATPases have 2 components, CF(1) - the catalytic core - and CF(0) - the membrane proton channel. CF(1) has five subunits: alpha(3), beta(3), gamma(1), delta(1), epsilon(1). CF(0) has three main subunits: a, b and c.

It is found in the cell inner membrane. Functionally, produces ATP from ADP in the presence of a proton gradient across the membrane. In Neisseria meningitidis serogroup C (strain 053442), this protein is ATP synthase epsilon chain.